We begin with the raw amino-acid sequence, 286 residues long: Soluble epoxide hydrolase (286 aa).

The 98-residue stretch at 26-123 (YPLVLLHGWP…DLVERLFILD (98 aa)) folds into the AB hydrolase-1 domain. Asp-99 serves as the catalytic Nucleophile. Residue Tyr-209 is the Proton donor of the active site. His-264 serves as the catalytic Proton acceptor.

Belongs to the AB hydrolase superfamily. Epoxide hydrolase family. In terms of assembly, homotetramer.

The protein resides in the cytoplasm. It is found in the cell membrane. It catalyses the reaction an epoxide + H2O = an ethanediol. Functionally, involved in catabolic degradation of epoxides. Shows highest activity towards C6 and C7 carbocyclic epoxides. Also active towards linear 1,2-epoxyalkanes. In Corynebacterium sp. (strain C12), this protein is Soluble epoxide hydrolase.